The primary structure comprises 388 residues: Succinate--CoA ligase [ADP-forming] subunit beta (388 aa).

The ATP-grasp domain maps to 9–244; it reads KQLFAEYGLP…PSQDDPREAH (236 aa). ATP is bound by residues K46, 53–55, E99, T102, and E107; that span reads GRG. The Mg(2+) site is built by N199 and D213. Residues N264 and 321–323 each bind substrate; that span reads GIV.

It belongs to the succinate/malate CoA ligase beta subunit family. Heterotetramer of two alpha and two beta subunits. Mg(2+) is required as a cofactor.

It catalyses the reaction succinate + ATP + CoA = succinyl-CoA + ADP + phosphate. The enzyme catalyses GTP + succinate + CoA = succinyl-CoA + GDP + phosphate. It functions in the pathway carbohydrate metabolism; tricarboxylic acid cycle; succinate from succinyl-CoA (ligase route): step 1/1. In terms of biological role, succinyl-CoA synthetase functions in the citric acid cycle (TCA), coupling the hydrolysis of succinyl-CoA to the synthesis of either ATP or GTP and thus represents the only step of substrate-level phosphorylation in the TCA. The beta subunit provides nucleotide specificity of the enzyme and binds the substrate succinate, while the binding sites for coenzyme A and phosphate are found in the alpha subunit. The sequence is that of Succinate--CoA ligase [ADP-forming] subunit beta from Pseudomonas fluorescens (strain Pf0-1).